A 529-amino-acid polypeptide reads, in one-letter code: Alkaline phosphatase, germ cell type (529 aa).

The N-terminal stretch at 1–18 is a signal peptide; the sequence is MWGACLLLLGLSLQVCPS. Residue Asp60 participates in Mg(2+) binding. Asp60 and Ser110 together coordinate Zn(2+). The active-site Phosphoserine intermediate is the Ser110. A disulfide bond links Cys139 and Cys201. A glycan (N-linked (GlcNAc...) asparagine) is linked at Asn140. Ser173 is a Mg(2+) binding site. Ca(2+) is bound at residue Glu234. N-linked (GlcNAc...) asparagine glycosylation is found at Asn267 and Asn277. The Ca(2+) site is built by Phe287, Glu288, and Asp303. Position 329 (Glu329) interacts with Mg(2+). 5 residues coordinate Zn(2+): Asp334, His338, Asp375, His376, and His450. Cysteines 485 and 492 form a disulfide. Ser502 carries GPI-anchor amidated serine lipidation. Positions 503–529 are cleaved as a propeptide — removed in mature form; sequence AVSPGYMSTLLCLLAGKMLMLMAAAEP.

Belongs to the alkaline phosphatase family. Homodimer. Mg(2+) serves as cofactor. Zn(2+) is required as a cofactor. Requires Ca(2+) as cofactor. In terms of tissue distribution, embryo and testis.

Its subcellular location is the cell membrane. The catalysed reaction is a phosphate monoester + H2O = an alcohol + phosphate. Inhibited by L-leucine, EDTA and heat. Functionally, alkaline phosphatase that can hydrolyze various phosphate compounds. The sequence is that of Alkaline phosphatase, germ cell type (Alpg) from Mus musculus (Mouse).